The sequence spans 223 residues: Transcription factor bHLH75 (223 aa).

A disordered region spans residues 58-100 (FPNLLHGNTRRKGNKEESGSKRRRKRSEEEEAMNGDETQKPKD). The 51-residue stretch at 110 to 160 (QATDSHSLAERVRREKINERLKCLQDLVPGCYKAMGMAVMLDVIIDYVRSL) folds into the bHLH domain.

As to quaternary structure, homodimer. As to expression, expressed in leaves, stems, and flowers.

Its subcellular location is the nucleus. The chain is Transcription factor bHLH75 (BHLH75) from Arabidopsis thaliana (Mouse-ear cress).